The sequence spans 386 residues: Vesicle-associated protein 2-2 (386 aa).

Position 1 is an N-acetylmethionine (M1). The Cytoplasmic segment spans residues M1 to N363. One can recognise an MSP domain in the interval L5–V125. Phosphoserine is present on S279. Positions E300–R353 form a coiled coil. The helical; Anchor for type IV membrane protein transmembrane segment at G364–L384 threads the bilayer.

It belongs to the VAMP-associated protein (VAP) (TC 9.B.17) family. In terms of assembly, interacts with cowpea mosaic virus (CPMV) NTP-binding protein (NTB).

Its subcellular location is the endoplasmic reticulum membrane. Functionally, may play a role in vesicle trafficking. This Arabidopsis thaliana (Mouse-ear cress) protein is Vesicle-associated protein 2-2 (PVA22).